The chain runs to 125 residues: Succinate dehydrogenase assembly factor 3, mitochondrial (125 aa).

Residues 1 to 30 (MPGRHVSRVRALYKRVLQLHRVLPPDLKSL) constitute a mitochondrion transit peptide.

Belongs to the complex I LYR family. SDHAF3 subfamily. Interacts with SDHB within an SDHA-SDHB subcomplex.

It is found in the mitochondrion matrix. Its function is as follows. Plays an essential role in the assembly of succinate dehydrogenase (SDH), an enzyme complex (also referred to as respiratory complex II) that is a component of both the tricarboxylic acid (TCA) cycle and the mitochondrial electron transport chain, and which couples the oxidation of succinate to fumarate with the reduction of ubiquinone (coenzyme Q) to ubiquinol. Promotes maturation of the iron-sulfur protein subunit SDHB of the SDH catalytic dimer, protecting it from the deleterious effects of oxidants. May act together with SDHAF1. The chain is Succinate dehydrogenase assembly factor 3, mitochondrial from Homo sapiens (Human).